The primary structure comprises 543 residues: Thermosome subunit beta (543 aa).

The disordered stretch occupies residues 522–543; the sequence is TKSSSSSSNPPKSGSSSESSED. Low complexity predominate over residues 523 to 543; that stretch reads KSSSSSSNPPKSGSSSESSED.

It belongs to the TCP-1 chaperonin family. As to quaternary structure, forms a Heterooligomeric complex of two stacked eight-membered rings. The N-terminus is blocked.

Its function is as follows. Molecular chaperone; binds unfolded polypeptides in vitro, and has a weak ATPase activity. This Thermoplasma acidophilum (strain ATCC 25905 / DSM 1728 / JCM 9062 / NBRC 15155 / AMRC-C165) protein is Thermosome subunit beta (thsB).